Consider the following 222-residue polypeptide: tRNA (guanine-N(1)-)-methyltransferase (222 aa).

S-adenosyl-L-methionine-binding positions include G112 and 132–137; that span reads IGDYVL.

Belongs to the RNA methyltransferase TrmD family. In terms of assembly, homodimer.

It localises to the cytoplasm. The enzyme catalyses guanosine(37) in tRNA + S-adenosyl-L-methionine = N(1)-methylguanosine(37) in tRNA + S-adenosyl-L-homocysteine + H(+). Functionally, specifically methylates guanosine-37 in various tRNAs. This chain is tRNA (guanine-N(1)-)-methyltransferase, found in Azobacteroides pseudotrichonymphae genomovar. CFP2.